Reading from the N-terminus, the 417-residue chain is D-galactonate dehydratase family member Dd703_0947 (417 aa).

Residue H127 coordinates substrate. Residue Y158 is the Proton donor/acceptor of the active site. D223 is a binding site for Mg(2+). H225 functions as the Proton donor/acceptor in the catalytic mechanism. Positions 249 and 275 each coordinate Mg(2+). 5 residues coordinate substrate: E275, R296, H325, D329, and E352.

This sequence belongs to the mandelate racemase/muconate lactonizing enzyme family. GalD subfamily. It depends on Mg(2+) as a cofactor.

It carries out the reaction D-mannonate = 2-dehydro-3-deoxy-D-gluconate + H2O. The enzyme catalyses D-gluconate = 2-dehydro-3-deoxy-D-gluconate + H2O. Has low dehydratase activity with D-mannonate and D-gluconate, suggesting that these are not physiological substrates and that it has no significant role in the in vivo degradation of these compounds. Has no detectable activity with a panel of 70 other acid sugars (in vitro). The protein is D-galactonate dehydratase family member Dd703_0947 of Musicola paradisiaca (strain Ech703) (Dickeya paradisiaca).